The primary structure comprises 400 residues: S-adenosylmethionine synthase (400 aa).

His-15 is an ATP binding site. Asp-17 contacts Mg(2+). Glu-43 is a binding site for K(+). L-methionine-binding residues include Glu-56 and Gln-99. Positions 99–109 (QSLEIGAGVDT) are flexible loop. ATP contacts are provided by residues 174–176 (DGK), Asp-254, 260–261 (RK), Ala-277, and Lys-281. Asp-254 contacts L-methionine. Lys-285 provides a ligand contact to L-methionine.

The protein belongs to the AdoMet synthase family. As to quaternary structure, homotetramer; dimer of dimers. Mg(2+) is required as a cofactor. K(+) serves as cofactor.

Its subcellular location is the cytoplasm. The catalysed reaction is L-methionine + ATP + H2O = S-adenosyl-L-methionine + phosphate + diphosphate. It functions in the pathway amino-acid biosynthesis; S-adenosyl-L-methionine biosynthesis; S-adenosyl-L-methionine from L-methionine: step 1/1. Catalyzes the formation of S-adenosylmethionine (AdoMet) from methionine and ATP. The overall synthetic reaction is composed of two sequential steps, AdoMet formation and the subsequent tripolyphosphate hydrolysis which occurs prior to release of AdoMet from the enzyme. The polypeptide is S-adenosylmethionine synthase (Corynebacterium kroppenstedtii (strain DSM 44385 / JCM 11950 / CIP 105744 / CCUG 35717)).